We begin with the raw amino-acid sequence, 248 residues long: UPF0173 metal-dependent hydrolase Hlac_1347 (248 aa).

This sequence belongs to the UPF0173 family.

The chain is UPF0173 metal-dependent hydrolase Hlac_1347 from Halorubrum lacusprofundi (strain ATCC 49239 / DSM 5036 / JCM 8891 / ACAM 34).